Here is a 158-residue protein sequence, read N- to C-terminus: Ribosome maturation factor RimP (158 aa).

The protein belongs to the RimP family.

It is found in the cytoplasm. Its function is as follows. Required for maturation of 30S ribosomal subunits. The chain is Ribosome maturation factor RimP from Pediococcus pentosaceus (strain ATCC 25745 / CCUG 21536 / LMG 10740 / 183-1w).